Reading from the N-terminus, the 102-residue chain is Putative pterin-4-alpha-carbinolamine dehydratase (102 aa).

Belongs to the pterin-4-alpha-carbinolamine dehydratase family.

The enzyme catalyses (4aS,6R)-4a-hydroxy-L-erythro-5,6,7,8-tetrahydrobiopterin = (6R)-L-erythro-6,7-dihydrobiopterin + H2O. The polypeptide is Putative pterin-4-alpha-carbinolamine dehydratase (Burkholderia ambifaria (strain ATCC BAA-244 / DSM 16087 / CCUG 44356 / LMG 19182 / AMMD) (Burkholderia cepacia (strain AMMD))).